The primary structure comprises 620 residues: Translocator protein BipB (620 aa).

Positions 58-95 are disordered; it reads QCDAQPAAHDARLDDKPALRAPQERDAPPLGASDTGSR. Basic and acidic residues predominate over residues 66 to 84; that stretch reads HDARLDDKPALRAPQERDA. A coiled-coil region spans residues 309–339; sequence EMQAKREAELQKKSDEYQAQVKKAEEMQKTM. 3 consecutive transmembrane segments (helical) span residues 355 to 375, 401 to 421, and 430 to 450; these read FAAA…GLAL, AILK…LVAC, and LAGA…AAFV.

This sequence belongs to the SctE/SipB/YopB family.

Its subcellular location is the secreted. The protein localises to the host membrane. In terms of biological role, plays a role in the bacterium-induced formation of multinucleated giant cell (MNGC), which is formed after host cell fusion, as well as in the intercellular spreading of bacteria and in the induction of apoptosis in macrophages. May act in concert with other effector proteins to induce fusion of host cell membranes. The chain is Translocator protein BipB (bipB) from Burkholderia pseudomallei (strain 1710b).